The following is a 619-amino-acid chain: Keratin, type II cytoskeletal 1 (619 aa).

The tract at residues 1–180 (MSRHFSSRSG…DPEIQKVKTR (180 aa)) is head. At Arg12 the chain carries Omega-N-methylarginine. Phosphoserine is present on residues Ser18 and Ser21. Residues 28 to 49 (QRRTTSSSVRHSGGGGGRFSGG) are disordered. Residues 39 to 49 (SGGGGGRFSGG) show a composition bias toward gly residues. Arg45 carries the omega-N-methylarginine modification. Ser68 bears the Phosphoserine mark. Residues 173–477 (EIQKVKTRER…ELMNTKLALD (305 aa)) adopt a coiled-coil conformation. Positions 181 to 216 (EREQIKSLNNQFASFIDKVRFLEQQNQVLQTKWELL) are coil 1A. Residues 181–494 (EREQIKSLNN…TLLEGEESRM (314 aa)) form the IF rod domain. The segment at 217-235 (QQVDTSTRTHSLEPYFENY) is linker 1. The segment at 236 to 327 (ISNLRRRVDQ…TLYQAELSQM (92 aa)) is coil 1B. The residue at position 277 (Lys277) is an N6,N6-dimethyllysine. Residues 328–351 (QTQISETNVILSMDNNRSLDLDSI) form a linker 12 region. Ser345 carries the post-translational modification Phosphoserine. Residues 352–490 (ISEVKAQYEE…ATYRTLLEGE (139 aa)) form a coil 2 region. The segment at 491 to 619 (ESRMSGECAP…VSTSYSRAVR (129 aa)) is tail. 2 positions are modified to omega-N-methylarginine: Arg519 and Arg575. The interval 559–619 (GGGGGGYGSS…VSTSYSRAVR (61 aa)) is disordered. A compositionally biased stretch (gly residues) spans 573–595 (GHRGGSGGGSRSGGSSGGRGSSS). Low complexity predominate over residues 596-606 (GGIKTSSGSSS). Positions 607–619 (VKFVSTSYSRAVR) are enriched in polar residues.

The protein belongs to the intermediate filament family. Heterotetramer of two type I and two type II keratins. Heterodimer with KRT10. Two heterodimers of KRT1 and KRT10 form a heterotetramer. Forms a heterodimer with KRT14; the interaction is more abundant in the absence of KRT5. Interacts with ITGB1 in the presence of RACK1 and SRC, and with RACK1. Interacts with C1QBP; the association represents a cell surface kininogen receptor. Interacts with EPPK1; interaction is dependent of higher-order structure of intermediate filament. Undergoes deimination of some arginine residues (citrullination).

Its subcellular location is the cell membrane. It is found in the cytoplasm. In terms of biological role, may regulate the activity of kinases such as PKC and SRC via binding to integrin beta-1 (ITB1) and the receptor of activated protein C kinase 1 (RACK1). In complex with C1QBP is a high affinity receptor for kininogen-1/HMWK. This Canis lupus familiaris (Dog) protein is Keratin, type II cytoskeletal 1.